Here is a 314-residue protein sequence, read N- to C-terminus: DNA topoisomerase 1 (314 aa).

A Topo IB-type catalytic domain is found at 73–314 (GKMHVQRRNS…TDYITNTQTV (242 aa)). Tyr-273 acts as the O-(3'-phospho-DNA)-tyrosine intermediate in catalysis.

The protein belongs to the type IB topoisomerase family.

The enzyme catalyses ATP-independent breakage of single-stranded DNA, followed by passage and rejoining.. In terms of biological role, releases the supercoiling and torsional tension of DNA introduced during the DNA replication and transcription by transiently cleaving and rejoining one strand of the DNA duplex. Introduces a single-strand break via transesterification at a target site in duplex DNA. The scissile phosphodiester is attacked by the catalytic tyrosine of the enzyme, resulting in the formation of a DNA-(3'-phosphotyrosyl)-enzyme intermediate and the expulsion of a 5'-OH DNA strand. The free DNA strand then undergoes passage around the unbroken strand thus removing DNA supercoils. Finally, in the religation step, the DNA 5'-OH attacks the covalent intermediate to expel the active-site tyrosine and restore the DNA phosphodiester backbone. The sequence is that of DNA topoisomerase 1 (TOP1) from Oryctolagus cuniculus (Rabbit).